The sequence spans 308 residues: Cell division protein FtsQ (308 aa).

The interval 1-28 (MQSLSFPPNRRTPRLAPPRRETGRRDPA) is disordered. Residues 1 to 46 (MQSLSFPPNRRTPRLAPPRRETGRRDPAPSRWAYRAQRLWLTPMFR) lie on the Cytoplasmic side of the membrane. Over residues 18 to 28 (PRRETGRRDPA) the composition is skewed to basic and acidic residues. Residues 47–67 (TALRVGLPIVGVLLVVALIFA) traverse the membrane as a helical segment. The Periplasmic portion of the chain corresponds to 68–308 (SADRRAAMAG…RGIDTSGSDL (241 aa)). The 69-residue stretch at 92-160 (FMVTLLSVDG…GLLEVRVTER (69 aa)) folds into the POTRA domain.

Belongs to the FtsQ/DivIB family. FtsQ subfamily.

It is found in the cell inner membrane. Functionally, essential cell division protein. This chain is Cell division protein FtsQ, found in Cereibacter sphaeroides (strain ATCC 17023 / DSM 158 / JCM 6121 / CCUG 31486 / LMG 2827 / NBRC 12203 / NCIMB 8253 / ATH 2.4.1.) (Rhodobacter sphaeroides).